The primary structure comprises 384 residues: S-adenosylmethionine synthase (384 aa).

His-15 provides a ligand contact to ATP. Asp-17 contacts Mg(2+). K(+) is bound at residue Glu-43. Residues Glu-56 and Gln-99 each contribute to the L-methionine site. The tract at residues 99-109 (QSPDINQGVDK) is flexible loop. ATP is bound by residues 164 to 166 (DAK), 230 to 231 (RF), Asp-239, 245 to 246 (RK), Ala-262, and Lys-266. Residue Asp-239 participates in L-methionine binding. Residue Lys-270 participates in L-methionine binding.

Belongs to the AdoMet synthase family. As to quaternary structure, homotetramer; dimer of dimers. Requires Mg(2+) as cofactor. It depends on K(+) as a cofactor.

Its subcellular location is the cytoplasm. The catalysed reaction is L-methionine + ATP + H2O = S-adenosyl-L-methionine + phosphate + diphosphate. Its pathway is amino-acid biosynthesis; S-adenosyl-L-methionine biosynthesis; S-adenosyl-L-methionine from L-methionine: step 1/1. In terms of biological role, catalyzes the formation of S-adenosylmethionine (AdoMet) from methionine and ATP. The overall synthetic reaction is composed of two sequential steps, AdoMet formation and the subsequent tripolyphosphate hydrolysis which occurs prior to release of AdoMet from the enzyme. The sequence is that of S-adenosylmethionine synthase from Aliivibrio salmonicida (strain LFI1238) (Vibrio salmonicida (strain LFI1238)).